Reading from the N-terminus, the 159-residue chain is 2-C-methyl-D-erythritol 2,4-cyclodiphosphate synthase (159 aa).

The a divalent metal cation site is built by D10 and H12. 4-CDP-2-C-methyl-D-erythritol 2-phosphate-binding positions include 10-12 (DVH) and 36-37 (HS). H44 is an a divalent metal cation binding site. 4-CDP-2-C-methyl-D-erythritol 2-phosphate is bound by residues 58-60 (DIG), 63-67 (FSDTD), and R144.

The protein belongs to the IspF family. As to quaternary structure, homotrimer. A divalent metal cation serves as cofactor.

The enzyme catalyses 4-CDP-2-C-methyl-D-erythritol 2-phosphate = 2-C-methyl-D-erythritol 2,4-cyclic diphosphate + CMP. It functions in the pathway isoprenoid biosynthesis; isopentenyl diphosphate biosynthesis via DXP pathway; isopentenyl diphosphate from 1-deoxy-D-xylulose 5-phosphate: step 4/6. Involved in the biosynthesis of isopentenyl diphosphate (IPP) and dimethylallyl diphosphate (DMAPP), two major building blocks of isoprenoid compounds. Catalyzes the conversion of 4-diphosphocytidyl-2-C-methyl-D-erythritol 2-phosphate (CDP-ME2P) to 2-C-methyl-D-erythritol 2,4-cyclodiphosphate (ME-CPP) with a corresponding release of cytidine 5-monophosphate (CMP). The protein is 2-C-methyl-D-erythritol 2,4-cyclodiphosphate synthase of Paraburkholderia xenovorans (strain LB400).